The chain runs to 359 residues: 3-dehydroquinate synthase (359 aa).

NAD(+) contacts are provided by residues 72–77, 106–110, 130–131, lysine 143, lysine 152, and 170–173; these read EGEIHK, GVIGD, TS, and CLKT. Residues glutamate 185, histidine 248, and histidine 264 each coordinate Zn(2+).

Belongs to the sugar phosphate cyclases superfamily. Dehydroquinate synthase family. It depends on Co(2+) as a cofactor. Requires Zn(2+) as cofactor. The cofactor is NAD(+).

It is found in the cytoplasm. It catalyses the reaction 7-phospho-2-dehydro-3-deoxy-D-arabino-heptonate = 3-dehydroquinate + phosphate. The protein operates within metabolic intermediate biosynthesis; chorismate biosynthesis; chorismate from D-erythrose 4-phosphate and phosphoenolpyruvate: step 2/7. In terms of biological role, catalyzes the conversion of 3-deoxy-D-arabino-heptulosonate 7-phosphate (DAHP) to dehydroquinate (DHQ). The chain is 3-dehydroquinate synthase from Dehalococcoides mccartyi (strain CBDB1).